The following is a 218-amino-acid chain: Ribonuclease T (218 aa).

The 175-residue stretch at 22-196 (VVVDVETAGF…YDAMKTAELF (175 aa)) folds into the Exonuclease domain. Mg(2+) contacts are provided by aspartate 25, glutamate 27, histidine 183, and aspartate 188. Histidine 183 acts as the Proton donor/acceptor in catalysis.

This sequence belongs to the RNase T family. Homodimer. Requires Mg(2+) as cofactor.

Its function is as follows. Trims short 3' overhangs of a variety of RNA species, leaving a one or two nucleotide 3' overhang. Responsible for the end-turnover of tRNA: specifically removes the terminal AMP residue from uncharged tRNA (tRNA-C-C-A). Also appears to be involved in tRNA biosynthesis. The sequence is that of Ribonuclease T from Hahella chejuensis (strain KCTC 2396).